A 123-amino-acid chain; its full sequence is Hydrogenase maturation factor HypA (123 aa).

Residue His-2 coordinates Ni(2+). Residues Cys-77, Cys-80, Cys-96, and Cys-99 each contribute to the Zn(2+) site.

It belongs to the HypA/HybF family.

Its function is as follows. Involved in the maturation of [NiFe] hydrogenases. Required for nickel insertion into the metal center of the hydrogenase. In Methanococcus aeolicus (strain ATCC BAA-1280 / DSM 17508 / OCM 812 / Nankai-3), this protein is Hydrogenase maturation factor HypA.